A 600-amino-acid polypeptide reads, in one-letter code: E3 ubiquitin-protein ligase RLIM (600 aa).

At M1 the chain carries N-acetylmethionine. The segment covering 1-11 (MENSDSNDKGS) has biased composition (basic and acidic residues). Disordered stretches follow at residues 1 to 24 (MENS…QMDR), 49 to 355 (NNLL…ERGG), and 417 to 497 (SDSE…VTFD). Composition is skewed to polar residues over residues 103-131 (SVRQ…NPNS) and 140-152 (INVN…QTSE). Phosphoserine is present on S163. Residues 166–175 (NMESSSQRQM) are compositionally biased toward polar residues. Positions 176–187 (ENSASESASARP) are enriched in low complexity. S194, S227, and S229 each carry phosphoserine. A compositionally biased stretch (basic and acidic residues) spans 213-228 (RSPEHRRTRARAERSR). The span at 244 to 255 (LEQSSENEPEGS) shows a compositional bias: polar residues. S269 is subject to Phosphoserine. Positions 288 to 306 (SQGTSSSDTGSNSESSGSG) are enriched in low complexity. The segment covering 322-332 (RPGEYRQRDSI) has biased composition (basic and acidic residues). Over residues 333-349 (ASRTRSRSQAPNNTVTY) the composition is skewed to polar residues. Residues 448–475 (SGSSSSSSPSPSSSGESSESSSEMFEGS) show a composition bias toward low complexity. The RING-type zinc-finger motif lies at 546-587 (CSVCITEYTEGNKLRKLPCSHEYHVHCIDRWLSENSTCPICR). A PDZ-binding motif is present at residues 597–600 (ESVV).

The protein belongs to the RNF12 family. In terms of assembly, interacts (via N-terminus) with TERF1. Interacts (via C-terminus) with ESR1. Interacts with LIM/homeobox factors such as LHX3. Interacts with LDB1, LDB2 and SIN3A. Interacts with LIMK1.

The protein resides in the nucleus. The enzyme catalyses S-ubiquitinyl-[E2 ubiquitin-conjugating enzyme]-L-cysteine + [acceptor protein]-L-lysine = [E2 ubiquitin-conjugating enzyme]-L-cysteine + N(6)-ubiquitinyl-[acceptor protein]-L-lysine.. It functions in the pathway protein modification; protein ubiquitination. In terms of biological role, E3 ubiquitin-protein ligase that acts as a negative coregulator for LIM homeodomain transcription factors by mediating the ubiquitination and subsequent degradation of LIM cofactors LDB1 and LDB2 and by mediating the recruitment the SIN3a/histone deacetylase corepressor complex. Ubiquitination and degradation of LIM cofactors LDB1 and LDB2 allows DNA-bound LIM homeodomain transcription factors to interact with other protein partners such as RLIM. Plays a role in telomere length-mediated growth suppression by mediating the ubiquitination and degradation of TERF1. By targeting ZFP42 for degradation, acts as an activator of random inactivation of X chromosome in the embryo, a stochastic process in which one X chromosome is inactivated to minimize sex-related dosage differences of X-encoded genes in somatic cells of female placental mammals. In Mus musculus (Mouse), this protein is E3 ubiquitin-protein ligase RLIM (Rlim).